A 148-amino-acid polypeptide reads, in one-letter code: Large ribosomal subunit protein uL15 (148 aa).

Residues 1 to 57 (MRLNDVKPQKGSKKRRRRVGRGISAGQGASAGLGMRGQKSRSGSGTRPGFEGGQQPL) are disordered. The span at 10–20 (KGSKKRRRRVG) shows a compositional bias: basic residues. Residues 23–35 (ISAGQGASAGLGM) show a composition bias toward gly residues.

Belongs to the universal ribosomal protein uL15 family. As to quaternary structure, part of the 50S ribosomal subunit.

In terms of biological role, binds to the 23S rRNA. This Nostoc sp. (strain PCC 7120 / SAG 25.82 / UTEX 2576) protein is Large ribosomal subunit protein uL15.